An 838-amino-acid polypeptide reads, in one-letter code: Periplasmic nitrate reductase (838 aa).

The tat-type signal signal peptide spans 1–29; it reads MDMSRRTLLKAQAAAAAAAVAGIDLPAEA. Positions 40–96 constitute a 4Fe-4S Mo/W bis-MGD-type domain; that stretch reads LKWSKAPCRFCGTGCGVMVGVKDGRVVATHGDMQAEVNRGLNCVKGYFLSKIMYGAD. [4Fe-4S] cluster is bound by residues Cys-47, Cys-50, Cys-54, and Cys-82. Residues Lys-84, Gln-151, Asn-176, Cys-180, 213–220, 244–248, 263–265, Met-374, Gln-378, Asn-484, 510–511, Lys-533, Asp-560, and 720–729 each bind Mo-bis(molybdopterin guanine dinucleotide); these read WGSNMAEM, STYEH, GTD, SD, and TGRVLEHWHS. Phe-796 lines the substrate pocket. Positions 804 and 821 each coordinate Mo-bis(molybdopterin guanine dinucleotide).

Belongs to the prokaryotic molybdopterin-containing oxidoreductase family. NasA/NapA/NarB subfamily. Component of the periplasmic nitrate reductase NapAB complex composed of NapA and NapB. [4Fe-4S] cluster serves as cofactor. It depends on Mo-bis(molybdopterin guanine dinucleotide) as a cofactor. Post-translationally, predicted to be exported by the Tat system. The position of the signal peptide cleavage has not been experimentally proven.

The protein resides in the periplasm. It carries out the reaction 2 Fe(II)-[cytochrome] + nitrate + 2 H(+) = 2 Fe(III)-[cytochrome] + nitrite + H2O. Functionally, catalytic subunit of the periplasmic nitrate reductase complex NapAB. Receives electrons from NapB and catalyzes the reduction of nitrate to nitrite. The chain is Periplasmic nitrate reductase from Methylobacterium sp. (strain 4-46).